The sequence spans 122 residues: Large ribosomal subunit protein bL12 (122 aa).

This sequence belongs to the bacterial ribosomal protein bL12 family. As to quaternary structure, homodimer. Part of the ribosomal stalk of the 50S ribosomal subunit. Forms a multimeric L10(L12)X complex, where L10 forms an elongated spine to which 2 to 4 L12 dimers bind in a sequential fashion. Binds GTP-bound translation factors.

Forms part of the ribosomal stalk which helps the ribosome interact with GTP-bound translation factors. Is thus essential for accurate translation. The protein is Large ribosomal subunit protein bL12 of Staphylococcus haemolyticus (strain JCSC1435).